The primary structure comprises 1013 residues: Retinoblastoma-related protein 1 (1013 aa).

Residues 406–607 form a domain A region; sequence TPVSTAMTTA…EKGSSMYNSL (202 aa). A pocket region spans residues 406–858; it reads TPVSTAMTTA…NEIFIPAVKP (453 aa). The interval 608–727 is spacer; that stretch reads IVARPSLALE…PGGGGETCAE (120 aa). Residues 728 to 858 form a domain B region; sequence TGINIFFTKI…NEIFIPAVKP (131 aa). A phosphoserine mark is found at Ser-885 and Ser-898. The segment at 979-1013 is disordered; sequence VANSLNLQNQNQNQNGSDASSSGGAAPLKTEPTDS. A compositionally biased stretch (low complexity) spans 980 to 1004; it reads ANSLNLQNQNQNQNGSDASSSGGAA.

This sequence belongs to the retinoblastoma protein (RB) family. Interacts with the begomovirus replication-associated protein (Rep), the nanovirus Clink protein, the mastrevirus RepA protein, E2FA, E2FB and E2FC. Interacts with MSI1 through its Domain A. Interacts with ATPK1/S6K1. Interacts with SCR. Interacts with HAT2. Interacts with FAMA. Interacts with MYB124 and MYB88. Component of a DREAM-like complex which modulates a variety of developmentally regulated genes and of the mitotic genes in proliferating and differentiated cells. Associates with MYB3R3 in both earlier and later stages of leaves development. Interacts with MYB3R4 only at early stages of leaves development. Highly phosphorylated by CDKA-1 during G1 to S phase transition. Once hyper-phosphorylated, becomes inactive and unable to interact with E2F. Post-translationally, ubiquitinated. Subject to proteasome-dependent degradation during sucrose starvation. In terms of tissue distribution, expressed in actively dividing cells. Detected in the shoot apical meristem, in young leaf primordia and in both sporophytic tissue and the megagametophyte.

It is found in the nucleus. Key regulator of entry into cell division. Acts as a transcription repressor of E2F target genes, whose activity is required for progress from the G1 to the S phase of the cell cycle. Hyperphosphorylation by CDKA-1 prevents the binding to E2F transcription factors, allowing G1 to S phase transition to operate. Forms a stable complex with E2FA that functions in maintaining cell proliferation through repression of cell differentiation. Plays a central role in the mechanism controlling meristem cell differentiation, cell fate establishment and cell fate maintenance during organogenesis and gametogenesis. Required during lateral organ production. Also involved in controlling asymmetric divisions of stem cells in different stem cell niches. Acts as a negative regulator of cell proliferation during leaf and gametophytes development. At later stages of development, restricts the progression through additional endocycles. In the leaf, plays a role in the control of the mesophyll differentiation. Another role is its implication in the regulation of imprinted genes. Acts together with MSI1 to repress the expression of MET1 during gametogenesis. This in turn activates expression of the imprinted genes FIS2 and FWA. Regulates many genes of the polycomb repressive complex 2 (PRC2). Plays an important role in meiosis affecting different aspects of this complex process. Functions as a positive regulator of the developmental switch from embryonic heterotrophic growth to autotrophic growth. Interaction with mastrevirus RepA or nanovirus Clink protein disrupts the RBR/E2F interaction and releases the transcription of replicative enzymes needed by the virus by increasing the E2F DNA-binding activity. The sequence is that of Retinoblastoma-related protein 1 (RBR1) from Arabidopsis thaliana (Mouse-ear cress).